Reading from the N-terminus, the 247-residue chain is MMFNKQIFTILILSLSLALAGSGCISEGAEDNVAQEITVDEFSNIRENPVTPWNPEPSAPVIDPTAYIDPQASVIGEVTIGANVMVSPMASIRSDEGMPIFVGDRSNVQDGVVLHALETINEEGEPIEDNIVEVDGKEYAVYIGNNVSLAHQSQVHGPAAVGDDTFIGMQAFVFKSKVGNNCVLEPRSAAIGVTIPDGRYIPAGMVVTSQAEADKLPEVTDDYAYSHTNEAVVYVNVHLAEGYKETS.

Residues 1–34 form the signal peptide; it reads MMFNKQIFTILILSLSLALAGSGCISEGAEDNVA. Residue 93–95 participates in substrate binding; sequence RSD. Glu96 acts as the Proton donor/acceptor in catalysis. 109 to 110 provides a ligand contact to substrate; sequence QD. A Zn(2+)-binding site is contributed by His115. The active site involves Glu118. 2 residues coordinate Zn(2+): His151 and His156. Position 236 (Asn236) interacts with substrate.

The protein belongs to the gamma-class carbonic anhydrase family. As to quaternary structure, homotrimer. Zn(2+) serves as cofactor.

The protein localises to the secreted. The catalysed reaction is hydrogencarbonate + H(+) = CO2 + H2O. Functionally, reversible hydration of carbon dioxide. Important for growth on acetate. As a probably extracellular enzyme, it may support a H(+)/CH(3)COO(-) symport mechanism and/or conversion of CO(2) to HCO(3)(-), removing excess CO(2) produced by growth on acetate. This Methanosarcina thermophila (strain ATCC 43570 / DSM 1825 / OCM 12 / VKM B-1830 / TM-1) protein is Carbonic anhydrase.